Reading from the N-terminus, the 445-residue chain is Tubulin beta-2 chain (445 aa).

GTP contacts are provided by Gln-12, Glu-73, Ser-142, Gly-146, Thr-147, Gly-148, Asn-208, and Asn-230. Mg(2+) is bound at residue Glu-73.

Belongs to the tubulin family. As to quaternary structure, dimer of alpha and beta chains. A typical microtubule is a hollow water-filled tube with an outer diameter of 25 nm and an inner diameter of 15 nM. Alpha-beta heterodimers associate head-to-tail to form protofilaments running lengthwise along the microtubule wall with the beta-tubulin subunit facing the microtubule plus end conferring a structural polarity. Microtubules usually have 13 protofilaments but different protofilament numbers can be found in some organisms and specialized cells. Requires Mg(2+) as cofactor.

The protein localises to the cytoplasm. The protein resides in the cytoskeleton. Tubulin is the major constituent of microtubules, a cylinder consisting of laterally associated linear protofilaments composed of alpha- and beta-tubulin heterodimers. Microtubules grow by the addition of GTP-tubulin dimers to the microtubule end, where a stabilizing cap forms. Below the cap, tubulin dimers are in GDP-bound state, owing to GTPase activity of alpha-tubulin. The chain is Tubulin beta-2 chain (TUBB2) from Suillus bovinus (Jersey cow bolete).